A 374-amino-acid chain; its full sequence is 5-methylthioribulose-1-phosphate isomerase (374 aa).

It belongs to the RuBisCO large chain family. Type IV subfamily.

It carries out the reaction 5-(methylsulfanyl)-D-ribulose 1-phosphate = S-methyl-1-thio-D-xylulose 5-phosphate. The catalysed reaction is 5-(methylsulfanyl)-D-ribulose 1-phosphate = 1-(methylsulfanyl)ribulose 5-phosphate. Its pathway is amino-acid biosynthesis; L-methionine biosynthesis via salvage pathway. The protein operates within metabolic intermediate biosynthesis; 1-deoxy-D-xylulose 5-phosphate biosynthesis. Functionally, catalyzes the conversion of 5-methylthio-D-ribulose 1-phosphate (MTRu-1P) to a 3:1 mixture of 1-methylthioxylulose 5-phosphate (MTXu-5P) and 1-methylthioribulose 5-phosphate (MTRu-5P). Involved in the MTA-isoprenoid shunt of the methionine salvage pathway. In Rhodospirillum rubrum (strain ATCC 11170 / ATH 1.1.1 / DSM 467 / LMG 4362 / NCIMB 8255 / S1), this protein is 5-methylthioribulose-1-phosphate isomerase.